Reading from the N-terminus, the 344-residue chain is tRNA N6-adenosine threonylcarbamoyltransferase (344 aa).

Fe cation-binding residues include H116 and H120. Substrate is bound by residues 138–142 (LVSGG), D171, G184, D188, and N277. D307 contributes to the Fe cation binding site.

It belongs to the KAE1 / TsaD family. Fe(2+) is required as a cofactor.

It is found in the cytoplasm. It carries out the reaction L-threonylcarbamoyladenylate + adenosine(37) in tRNA = N(6)-L-threonylcarbamoyladenosine(37) in tRNA + AMP + H(+). In terms of biological role, required for the formation of a threonylcarbamoyl group on adenosine at position 37 (t(6)A37) in tRNAs that read codons beginning with adenine. Is involved in the transfer of the threonylcarbamoyl moiety of threonylcarbamoyl-AMP (TC-AMP) to the N6 group of A37, together with TsaE and TsaB. TsaD likely plays a direct catalytic role in this reaction. The sequence is that of tRNA N6-adenosine threonylcarbamoyltransferase from Latilactobacillus sakei subsp. sakei (strain 23K) (Lactobacillus sakei subsp. sakei).